The primary structure comprises 931 residues: 3'-5' exonuclease DinG (931 aa).

The Exonuclease domain maps to V7–I162. The Helicase ATP-binding domain maps to L250–N510. Position 284 to 291 (A284 to T291) interacts with ATP. The DEAH box signature appears at D462 to H465. In terms of domain architecture, Helicase C-terminal spans D741 to K897.

This sequence belongs to the helicase family. DinG subfamily. Type 2 sub-subfamily.

The protein resides in the cytoplasm. Its function is as follows. 3'-5' exonuclease. The polypeptide is 3'-5' exonuclease DinG (Bacillus subtilis (strain 168)).